A 547-amino-acid chain; its full sequence is ATP synthase subunit alpha (547 aa).

G172–T179 is an ATP binding site.

This sequence belongs to the ATPase alpha/beta chains family. F-type ATPases have 2 components, CF(1) - the catalytic core - and CF(0) - the membrane proton channel. CF(1) has five subunits: alpha(3), beta(3), gamma(1), delta(1), epsilon(1). CF(0) has three main subunits: a(1), b(2) and c(9-12). The alpha and beta chains form an alternating ring which encloses part of the gamma chain. CF(1) is attached to CF(0) by a central stalk formed by the gamma and epsilon chains, while a peripheral stalk is formed by the delta and b chains.

Its subcellular location is the cell membrane. The enzyme catalyses ATP + H2O + 4 H(+)(in) = ADP + phosphate + 5 H(+)(out). Functionally, produces ATP from ADP in the presence of a proton gradient across the membrane. The alpha chain is a regulatory subunit. This chain is ATP synthase subunit alpha, found in Rhodococcus jostii (strain RHA1).